Reading from the N-terminus, the 125-residue chain is UPF0231 protein APL_0968 (125 aa).

Belongs to the UPF0231 family.

The sequence is that of UPF0231 protein APL_0968 from Actinobacillus pleuropneumoniae serotype 5b (strain L20).